The primary structure comprises 171 residues: Flavodoxin (171 aa).

A Flavodoxin-like domain is found at 4–165 (IGIFFGSDTG…RIKQWVKQII (162 aa)).

Belongs to the flavodoxin family. FMN serves as cofactor.

Low-potential electron donor to a number of redox enzymes. The protein is Flavodoxin (fldA) of Buchnera aphidicola subsp. Acyrthosiphon pisum (strain APS) (Acyrthosiphon pisum symbiotic bacterium).